The following is a 23-amino-acid chain: Potassium channel toxin kappa-KTx 1.2 (23 aa).

2 disulfides stabilise this stretch: Cys-4-Cys-22 and Cys-8-Cys-18. At Cys-22 the chain carries Cysteine amide.

It belongs to the short scorpion toxin superfamily. Potassium channel inhibitor kappa-KTx family. Kappa-KTx 1 subfamily. Post-translationally, the two disulfide isomers globular (C1-C3, C2-C4) and beads (C1-C2, C3-C4) do not show activity on Kv10.1/KCNH1/EAG1. Expressed by the venom gland.

The protein localises to the secreted. In terms of biological role, shows weak blocking activity on voltage-gated potassium channels Kv10.1/KCNH1/EAG1 (IC(50)=26 uM), Kv1.2/KCNA2 (Kd=150 uM), Kv1.3/KCNA3 (Kd=40 uM), Kv1.6/KCNA3 (16.6% inhibition at 40 uM toxin). The block is dose-dependent, voltage-independent, and reversible. Also shows a weak inhibitory activity on the plant pathogen F.culmorum growth (IC(50)=18.8-37.7 uM). This is Potassium channel toxin kappa-KTx 1.2 from Chersonesometrus fulvipes (Indian black scorpion).